The primary structure comprises 456 residues: tRNA modification GTPase MnmE (456 aa).

Positions 24, 81, and 120 each coordinate (6S)-5-formyl-5,6,7,8-tetrahydrofolate. The TrmE-type G domain maps to 216 to 379; it reads GMTVVIAGRP…LRDHLKACMG (164 aa). N226 serves as a coordination point for K(+). GTP contacts are provided by residues 226–231, 245–251, 270–273, and 335–338; these read NAGKSS, TAIAGTT, DTAG, and NKAD. S230 serves as a coordination point for Mg(2+). The K(+) site is built by T245, I247, and T250. Position 251 (T251) interacts with Mg(2+). K456 provides a ligand contact to (6S)-5-formyl-5,6,7,8-tetrahydrofolate.

It belongs to the TRAFAC class TrmE-Era-EngA-EngB-Septin-like GTPase superfamily. TrmE GTPase family. Homodimer. Heterotetramer of two MnmE and two MnmG subunits. It depends on K(+) as a cofactor.

The protein localises to the cytoplasm. Functionally, exhibits a very high intrinsic GTPase hydrolysis rate. Involved in the addition of a carboxymethylaminomethyl (cmnm) group at the wobble position (U34) of certain tRNAs, forming tRNA-cmnm(5)s(2)U34. In Pseudomonas putida (strain W619), this protein is tRNA modification GTPase MnmE.